The primary structure comprises 236 residues: Probable 6-phosphogluconolactonase (236 aa).

It belongs to the glucosamine/galactosamine-6-phosphate isomerase family. 6-phosphogluconolactonase subfamily.

It carries out the reaction 6-phospho-D-glucono-1,5-lactone + H2O = 6-phospho-D-gluconate + H(+). It participates in carbohydrate degradation; pentose phosphate pathway; D-ribulose 5-phosphate from D-glucose 6-phosphate (oxidative stage): step 2/3. Its function is as follows. Hydrolysis of 6-phosphogluconolactone to 6-phosphogluconate. This chain is Probable 6-phosphogluconolactonase (pgl), found in Dictyostelium discoideum (Social amoeba).